The sequence spans 317 residues: Protoheme IX farnesyltransferase (317 aa).

The next 9 helical transmembrane spans lie at 29 to 49, 53 to 73, 102 to 122, 123 to 143, 151 to 171, 179 to 199, 224 to 241, 245 to 267, and 283 to 303; these read LILL…QGRV, LLLI…TINC, VFLA…FANL, LSAC…THWL, IVIG…AVTG, VLFG…AMLI, IFLY…LVYP, VSWG…AWQL, and FSIL…LLLP.

This sequence belongs to the UbiA prenyltransferase family. Protoheme IX farnesyltransferase subfamily.

The protein localises to the cell inner membrane. It carries out the reaction heme b + (2E,6E)-farnesyl diphosphate + H2O = Fe(II)-heme o + diphosphate. It functions in the pathway porphyrin-containing compound metabolism; heme O biosynthesis; heme O from protoheme: step 1/1. In terms of biological role, converts heme B (protoheme IX) to heme O by substitution of the vinyl group on carbon 2 of heme B porphyrin ring with a hydroxyethyl farnesyl side group. The protein is Protoheme IX farnesyltransferase of Thermosynechococcus vestitus (strain NIES-2133 / IAM M-273 / BP-1).